The primary structure comprises 465 residues: Transposase for insertion sequence IS1202 (465 aa).

An Integrase catalytic domain is found at 157–340 (HPSRPRKKFA…APNPSERNLI (184 aa)).

Required for the transposition of the insertion element. This chain is Transposase for insertion sequence IS1202, found in Streptococcus pneumoniae.